The chain runs to 789 residues: MEKNKQALLLQAIEDVFAFSFSKYAKYIIQDRALPDLRDGLKPVQRRILYGMYQMGLKPTSPYKKSARAVGEIMGKYHPHGDASIYDAIVRMSQAWKNNLTTISIHGNNGSIDGDNAAAMRYTEARLSPYGFELLKDIEKQLVPFVNNFDDSEVEPSVLPTLLPNLFINGTSGIAAGYATNIAPHNVGELLDGLSYRIENPDCDLKAILKIVKGPDFPTGGLVYFEQELANIYQTGKGKFVIQAKYETNTAFGQNQIVITEIPYETVKANIVKQIEELISDNKLSALESVIDSSDRSGIRIIINHKDFLSADKIMAFLFKHTQLQVNFNLNNTVIANRCPVRVGLLAYFDQFLAFAHELIINSAKYDLALANKRLEIIKGLIKAVSMIDEIIRLIRRATDKQDAKTKLIDKYAFTLNQAEAIVSLRLYQLTNTDIKVLFAEQKELEQTIQTAERLIAKPQARNQLLQAQFFQYKKQFNQPRRAQIVGLIEKQKVQDSDFIEHKEVGLLISHDGIYFKFEPEQLAKHLVEFKSEQDQLIFGGVVQNSDYFFMVTSLGNIITVPIYKTLSNTKTKMNELLAKKPILMEDEKLVLAGIVNPDKMEQQLLVLTSQCGMVKRVELSKVINTKQIKSSCCMALRERDKLVNAFVQTKGEPKLVCLVSSSNSFATFLAEEIPIISNKGIGVKGIKLKAEEKVRFAMPLQDNDALVVINSDGGVYNFEVVELAVASRMSVGKKLIPKTKTPVSCFAANKHSEIIGHRGKNGSDLFTLNELNRLPKSTVSQMRLFKWS.

Residues 34 to 499 form the Topo IIA-type catalytic domain; sequence LPDLRDGLKP…EKQKVQDSDF (466 aa). Catalysis depends on Y122, which acts as the O-(5'-phospho-DNA)-tyrosine intermediate.

The protein belongs to the type II topoisomerase GyrA/ParC subunit family. ParC type 2 subfamily. Heterotetramer composed of ParC and ParE.

It is found in the cell membrane. It carries out the reaction ATP-dependent breakage, passage and rejoining of double-stranded DNA.. Functionally, topoisomerase IV is essential for chromosome segregation. It relaxes supercoiled DNA. Performs the decatenation events required during the replication of a circular DNA molecule. This Mycoplasma pneumoniae (strain ATCC 29342 / M129 / Subtype 1) (Mycoplasmoides pneumoniae) protein is DNA topoisomerase 4 subunit A.